The chain runs to 386 residues: Trichocyst matrix protein T2-B (386 aa).

A signal peptide spans 1-19; sequence MKTIILALALIALVSSTQS. Residues 20–48 constitute a propeptide that is removed on maturation; the sequence is DVIDTIKKIDQSPFGRTLFDTIWLELQTG. Positions 51–154 form a coiled coil; the sequence is LDRLVSTLTD…AEEHEDFEEK (104 aa). Positions 184-238 are excised as a propeptide; that stretch reads KGKAAKQPHKFTKDVANLIQKHFTTSAKKTAKFQHRKGYSKLFKAFATIASKVEQ. A coiled-coil region spans residues 294-325; sequence ALANAISDLAALNDIIAQVEASLDTTVQRIEN.

This sequence belongs to the TMP family.

It localises to the trichocyst. Structural protein that crystallize inside the trichocyst matrix. The polypeptide is Trichocyst matrix protein T2-B (T2B) (Paramecium tetraurelia).